The sequence spans 430 residues: CinA-like protein (430 aa).

The protein belongs to the CinA family.

The protein is CinA-like protein of Mycobacterium tuberculosis (strain ATCC 25177 / H37Ra).